Reading from the N-terminus, the 125-residue chain is Holo-[acyl-carrier-protein] synthase (125 aa).

Positions 8 and 57 each coordinate Mg(2+).

Belongs to the P-Pant transferase superfamily. AcpS family. Mg(2+) is required as a cofactor.

Its subcellular location is the cytoplasm. The enzyme catalyses apo-[ACP] + CoA = holo-[ACP] + adenosine 3',5'-bisphosphate + H(+). Transfers the 4'-phosphopantetheine moiety from coenzyme A to a Ser of acyl-carrier-protein. The sequence is that of Holo-[acyl-carrier-protein] synthase from Thermus thermophilus (strain ATCC BAA-163 / DSM 7039 / HB27).